A 396-amino-acid polypeptide reads, in one-letter code: E3 ubiquitin-protein transferase MAEA (396 aa).

The region spanning 121 to 153 is the LisH domain; it reads KKKRMDRMMVEHLLRCGYYNTAVKLARQSGIED. Positions 159 to 216 constitute a CTLH domain; the sequence is MFLTAKEVEESLERQETATCLAWCHDNKSRLRKMKSCLEFSLRIQEFIELIRQNKRMD. The segment at 314 to 381 adopts an RING-Gid-type zinc-finger fold; that stretch reads CPVCSKSLNK…QDDKVICPRT (68 aa).

Identified in the CTLH complex that contains at least MAEA, RMND5A, GID8, WDR26, and RANBP9 and/or RANBP10 as the catalytic core. Interacts with F-actin.

Its subcellular location is the nucleus matrix. It localises to the cell membrane. The protein resides in the cytoplasm. It is found in the cytoskeleton. The catalysed reaction is S-ubiquitinyl-[E2 ubiquitin-conjugating enzyme]-L-cysteine + [acceptor protein]-L-lysine = [E2 ubiquitin-conjugating enzyme]-L-cysteine + N(6)-ubiquitinyl-[acceptor protein]-L-lysine.. Its function is as follows. Core component of the CTLH E3 ubiquitin-protein ligase complex that selectively accepts ubiquitin from UBE2H and mediates ubiquitination and subsequent proteasomal degradation of the transcription factor HBP1. MAEA and RMND5A are both required for catalytic activity of the CTLH E3 ubiquitin-protein ligase complex. MAEA is required for normal cell proliferation. The CTLH E3 ubiquitin-protein ligase complex is not required for the degradation of enzymes involved in gluconeogenesis, such as FBP1. Plays a role in erythroblast maturation and in the development of mature macrophages. Mediates the attachment of erythroid cell to mature macrophages; this MAEA-mediated contact inhibits erythroid cell apoptosis. Participates in erythroblastic island formation, which is the functional unit of definitive erythropoiesis. Associates with F-actin to regulate actin distribution in erythroblasts and macrophages. May contribute to nuclear architecture and cells division events. This chain is E3 ubiquitin-protein transferase MAEA (maea), found in Danio rerio (Zebrafish).